Consider the following 324-residue polypeptide: Probable pectinesterase A (324 aa).

Residues Met-1–Thr-19 form the signal peptide. Asn-27 carries N-linked (GlcNAc...) asparagine glycosylation. Gln-142 is a binding site for substrate. Asp-165 functions as the Proton donor in the catalytic mechanism. Asp-186 serves as the catalytic Nucleophile. Substrate-binding residues include Arg-246 and Trp-248.

This sequence belongs to the pectinesterase family.

The protein resides in the secreted. The enzyme catalyses [(1-&gt;4)-alpha-D-galacturonosyl methyl ester](n) + n H2O = [(1-&gt;4)-alpha-D-galacturonosyl](n) + n methanol + n H(+). Its pathway is glycan metabolism; pectin degradation; 2-dehydro-3-deoxy-D-gluconate from pectin: step 1/5. Its function is as follows. Involved in maceration and soft-rotting of plant tissue. The protein is Probable pectinesterase A (pmeA) of Aspergillus fumigatus (strain CBS 144.89 / FGSC A1163 / CEA10) (Neosartorya fumigata).